The sequence spans 308 residues: Pycsar effector protein PaPycTIR (308 aa).

Residue 54-143 coordinates a nucleoside 3',5'-cyclic phosphate; it reads LITEDAEDSE…RQVTRQLVDR (90 aa). Positions 160–278 are TIR-like; sequence VFIICSVEAL…DLKGLTTIGY (119 aa).

Its subcellular location is the cytoplasm. It catalyses the reaction NAD(+) + H2O = ADP-D-ribose + nicotinamide + H(+). In terms of biological role, pycsar (pyrimidine cyclase system for antiphage resistance) provides immunity against bacteriophage. The pyrimidine cyclase (PycC) synthesizes cyclic nucleotides in response to infection; these serve as specific second messenger signals. The signals activate the adjacent effector, leading to bacterial cell death and abortive phage infection. A clade A Pycsar system. The effector gene of a two-gene Pycsar system. Expression of this and adjacent uridylate cyclase PaPycC (AC P0DV40) probably confers resistance to bacteriophage. The genes are probably only expressed in response to bacteriophage infection. Probably only responds to cUMP (produced by its cognate NTP cyclase), acts by depleting cellular NAD(+) levels. The protein is Pycsar effector protein PaPycTIR of Pseudomonas aeruginosa.